The chain runs to 404 residues: UPF0674 endoplasmic reticulum membrane protein YNR021W (404 aa).

Serine 2 carries the post-translational modification N-acetylserine. N-linked (GlcNAc...) asparagine glycosylation occurs at asparagine 44. A helical transmembrane segment spans residues 49–68; that stretch reads LCALGVLFLVYAFYKFGNSV. Residue asparagine 98 is glycosylated (N-linked (GlcNAc...) asparagine). The interval 369–404 is disordered; that stretch reads AKRRQLKASGQQEKVDQKMKEKRERRLKNKQRTRFQ. The segment covering 381–392 has biased composition (basic and acidic residues); the sequence is EKVDQKMKEKRE. Positions 393-404 are enriched in basic residues; it reads RRLKNKQRTRFQ.

It belongs to the UPF0674 family.

The protein resides in the endoplasmic reticulum membrane. In Saccharomyces cerevisiae (strain ATCC 204508 / S288c) (Baker's yeast), this protein is UPF0674 endoplasmic reticulum membrane protein YNR021W.